A 233-amino-acid polypeptide reads, in one-letter code: Biosynthetic peptidoglycan transglycosylase (233 aa).

Residues 8 to 28 (LIALPVGIFIFFNAYVYGNII) traverse the membrane as a helical segment.

It belongs to the glycosyltransferase 51 family.

It localises to the cell inner membrane. The enzyme catalyses [GlcNAc-(1-&gt;4)-Mur2Ac(oyl-L-Ala-gamma-D-Glu-L-Lys-D-Ala-D-Ala)](n)-di-trans,octa-cis-undecaprenyl diphosphate + beta-D-GlcNAc-(1-&gt;4)-Mur2Ac(oyl-L-Ala-gamma-D-Glu-L-Lys-D-Ala-D-Ala)-di-trans,octa-cis-undecaprenyl diphosphate = [GlcNAc-(1-&gt;4)-Mur2Ac(oyl-L-Ala-gamma-D-Glu-L-Lys-D-Ala-D-Ala)](n+1)-di-trans,octa-cis-undecaprenyl diphosphate + di-trans,octa-cis-undecaprenyl diphosphate + H(+). It functions in the pathway cell wall biogenesis; peptidoglycan biosynthesis. Peptidoglycan polymerase that catalyzes glycan chain elongation from lipid-linked precursors. In Neisseria gonorrhoeae (strain NCCP11945), this protein is Biosynthetic peptidoglycan transglycosylase.